The primary structure comprises 237 residues: UPF0174 protein YaaW (237 aa).

Belongs to the UPF0174 family.

The chain is UPF0174 protein YaaW from Escherichia coli O157:H7.